Consider the following 290-residue polypeptide: MEFEAEHEGLTASWVAPAPQGGKGAEGRAGVADEAGHGKTEAECAEDGEKCGDAEMSALDRVQRDRWRFSSPPPHSGVTGKGAIPIKGDGKAIECQELTGEGEWLSQWEELPPEPRRSGNEHLDESRYAKQTERGSSTGKEEGDGMKQMGELAQQCEGGTYADLLVEAEQAVVHSVRALMLAERQNPNILGEHLNKKRVLVQRPRTILSVESENATMRSYMLVTLICSAKSLLLGSCMSFFAGMLVGRTADVKTPLWDTVCLLMAFCAGIVVGGVDSGEVESGETKSESN.

3 disordered regions span residues 1 to 49 (MEFE…EDGE), 67 to 87 (WRFSSPPPHSGVTGKGAIPIK), and 111 to 146 (LPPEPRRSGNEHLDESRYAKQTERGSSTGKEEGDGM). Residues 34–49 (EAGHGKTEAECAEDGE) show a composition bias toward basic and acidic residues. The segment covering 113-145 (PEPRRSGNEHLDESRYAKQTERGSSTGKEEGDG) has biased composition (basic and acidic residues). 2 consecutive transmembrane segments (helical) span residues 226–246 (ICSAKSLLLGSCMSFFAGMLV) and 255–275 (PLWDTVCLLMAFCAGIVVGGV).

Phosphorylated.

The protein localises to the membrane. The polypeptide is 38 kDa phosphoprotein (PP38) (Gallus gallus (Chicken)).